Reading from the N-terminus, the 781-residue chain is 5-methyltetrahydropteroyltriglutamate--homocysteine methyltransferase (781 aa).

5-methyltetrahydropteroyltri-L-glutamate-binding positions include 20–23 and K131; that span reads RELK. L-homocysteine contacts are provided by residues 453-455 and E506; that span reads IGS. Residues 453–455 and E506 contribute to the L-methionine site; that span reads IGS. 5-methyltetrahydropteroyltri-L-glutamate-binding positions include 537-538 and W583; that span reads RC. Residue D621 coordinates L-homocysteine. L-methionine is bound at residue D621. E627 lines the 5-methyltetrahydropteroyltri-L-glutamate pocket. The Zn(2+) site is built by H663, C665, and E687. Residue H716 is the Proton donor of the active site. A Zn(2+)-binding site is contributed by C748.

The protein belongs to the vitamin-B12 independent methionine synthase family. The cofactor is Zn(2+).

It carries out the reaction 5-methyltetrahydropteroyltri-L-glutamate + L-homocysteine = tetrahydropteroyltri-L-glutamate + L-methionine. It functions in the pathway amino-acid biosynthesis; L-methionine biosynthesis via de novo pathway; L-methionine from L-homocysteine (MetE route): step 1/1. Its function is as follows. Catalyzes the transfer of a methyl group from 5-methyltetrahydrofolate to homocysteine resulting in methionine formation. The polypeptide is 5-methyltetrahydropteroyltriglutamate--homocysteine methyltransferase (Bradyrhizobium diazoefficiens (strain JCM 10833 / BCRC 13528 / IAM 13628 / NBRC 14792 / USDA 110)).